Reading from the N-terminus, the 578-residue chain is PTS system fructose-specific EIIB'BC component (578 aa).

2 consecutive PTS EIIB type-2 domains span residues Met-1 to Ala-99 and Val-119 to Ala-214. Cys-125 serves as the catalytic Phosphocysteine intermediate; for EIIB activity. A Phosphocysteine; by EIIA modification is found at Cys-125. The region spanning Pro-241 to Ala-576 is the PTS EIIC type-2 domain. 9 consecutive transmembrane segments (helical) span residues Tyr-251–Ile-271, Leu-284–Ile-304, Ile-319–Phe-339, Val-364–Gly-384, Asn-405–Ile-425, Ala-428–Ala-450, Ala-477–Ala-497, Leu-518–Ile-538, and Leu-545–Ala-565.

It localises to the cell inner membrane. It carries out the reaction D-fructose(out) + N(pros)-phospho-L-histidyl-[protein] = D-fructose 1-phosphate(in) + L-histidyl-[protein]. Functionally, the phosphoenolpyruvate-dependent sugar phosphotransferase system (sugar PTS), a major carbohydrate active transport system, catalyzes the phosphorylation of incoming sugar substrates concomitantly with their translocation across the cell membrane. The enzyme II FruAB PTS system is involved in fructose transport. The polypeptide is PTS system fructose-specific EIIB'BC component (Rhodobacter capsulatus (Rhodopseudomonas capsulata)).